The following is a 710-amino-acid chain: Ephexin-1 (710 aa).

Composition is skewed to basic and acidic residues over residues 1–11 (METRESEDLEK) and 26–41 (EPAKVKPELLPEKEET). The tract at residues 1–143 (METRESEDLE…PGNGATPEEW (143 aa)) is disordered. The tract at residues 1–273 (METRESEDLE…LEILQPEEIK (273 aa)) is regulatory region; modulates activity toward RHOA, RAC1 and CDC42. 2 stretches are compositionally biased toward polar residues: residues 89–102 (ADSQDNGKSVNEPL) and 127–136 (MSESSSTPGN). Tyr179 bears the Phosphotyrosine mark. The segment at 194-236 (RRQQDAEIEDNTNGSPASEDTPEEEEEEEEEEEPASPPERKTL) is disordered. The segment covering 213 to 227 (DTPEEEEEEEEEEEP) has biased composition (acidic residues). One can recognise a DH domain in the interval 273–457 (KLQEAMFELV…EMVVKACNEG (185 aa)). The PH domain occupies 489-601 (WLLKQGELQQ…WMTSLAPNRR (113 aa)). The SH3 domain maps to 612-673 (LDCPQVQCVH…PSSMTEEILN (62 aa)). Residues 687 to 699 (VHKMDDPQRSQNK) show a composition bias toward basic and acidic residues. The segment at 687 to 710 (VHKMDDPQRSQNKDRRKLGSRNRQ) is disordered. Over residues 700-710 (DRRKLGSRNRQ) the composition is skewed to basic residues.

Interacts with CDK5R1 and EPHA4; activated by EPHA4 through the CDK5 kinase. Post-translationally, src-dependent phosphorylation at Tyr-179 upon EPHA4 activation increases the guanine exchange factor activity toward RHOA. Phosphorylation by CDK5 upon EPHA4 activation by EFNA1 may regulate dendritic spine morphogenesis. Highly expressed in brain specifically in caudate nucleus and to a lower extent in amygdala and hippocampus. Also detected in lung.

Its subcellular location is the cytoplasm. The protein localises to the membrane. It is found in the cell projection. It localises to the growth cone. Functionally, acts as a guanine nucleotide exchange factor (GEF) which differentially activates the GTPases RHOA, RAC1 and CDC42. Plays a role in axon guidance regulating ephrin-induced growth cone collapse and dendritic spine morphogenesis. Upon activation by ephrin through EPHA4, the GEF activity switches toward RHOA resulting in its activation. Activated RHOA promotes cone retraction at the expense of RAC1- and CDC42-stimulated growth cone extension. The polypeptide is Ephexin-1 (NGEF) (Homo sapiens (Human)).